The sequence spans 125 residues: Large-conductance mechanosensitive channel (125 aa).

A run of 3 helical transmembrane segments spans residues V19 to I39, L42 to A62, and G67 to V87.

The protein belongs to the MscL family. In terms of assembly, homopentamer.

The protein resides in the cell membrane. Its function is as follows. Channel that opens in response to stretch forces in the membrane lipid bilayer. May participate in the regulation of osmotic pressure changes within the cell. The protein is Large-conductance mechanosensitive channel of Limosilactobacillus fermentum (strain NBRC 3956 / LMG 18251) (Lactobacillus fermentum).